A 301-amino-acid polypeptide reads, in one-letter code: Ornithine carbamoyltransferase (301 aa).

Carbamoyl phosphate contacts are provided by residues Arg107 and 134–137 (HPLQ). Residues Asn165, Asp220, and 224–225 (SM) each bind L-ornithine. Carbamoyl phosphate is bound by residues 260 to 261 (CL) and Arg288.

Belongs to the aspartate/ornithine carbamoyltransferase superfamily. OTCase family. In terms of assembly, homotrimer.

The protein resides in the cytoplasm. The catalysed reaction is carbamoyl phosphate + L-ornithine = L-citrulline + phosphate + H(+). It participates in amino-acid biosynthesis; L-arginine biosynthesis; L-arginine from L-ornithine and carbamoyl phosphate: step 1/3. With respect to regulation, inhibited by delta-N-phosphonoacetyl-L-ornithine. Its function is as follows. Reversibly catalyzes the transfer of the carbamoyl group from carbamoyl phosphate (CP) to the N(epsilon) atom of ornithine (ORN) to produce L-citrulline, which is a substrate for argininosuccinate synthetase, the enzyme involved in the final step in arginine biosynthesis. The chain is Ornithine carbamoyltransferase from Thermus thermophilus (strain ATCC BAA-163 / DSM 7039 / HB27).